A 320-amino-acid polypeptide reads, in one-letter code: Lipoyl synthase (320 aa).

Cys-67, Cys-72, Cys-78, Cys-93, Cys-97, Cys-100, and Ser-307 together coordinate [4Fe-4S] cluster. The Radical SAM core domain occupies 79 to 296; the sequence is FNHGTATFMI…RDKANEMGFE (218 aa).

This sequence belongs to the radical SAM superfamily. Lipoyl synthase family. It depends on [4Fe-4S] cluster as a cofactor.

It is found in the cytoplasm. It carries out the reaction [[Fe-S] cluster scaffold protein carrying a second [4Fe-4S](2+) cluster] + N(6)-octanoyl-L-lysyl-[protein] + 2 oxidized [2Fe-2S]-[ferredoxin] + 2 S-adenosyl-L-methionine + 4 H(+) = [[Fe-S] cluster scaffold protein] + N(6)-[(R)-dihydrolipoyl]-L-lysyl-[protein] + 4 Fe(3+) + 2 hydrogen sulfide + 2 5'-deoxyadenosine + 2 L-methionine + 2 reduced [2Fe-2S]-[ferredoxin]. It functions in the pathway protein modification; protein lipoylation via endogenous pathway; protein N(6)-(lipoyl)lysine from octanoyl-[acyl-carrier-protein]: step 2/2. In terms of biological role, catalyzes the radical-mediated insertion of two sulfur atoms into the C-6 and C-8 positions of the octanoyl moiety bound to the lipoyl domains of lipoate-dependent enzymes, thereby converting the octanoylated domains into lipoylated derivatives. This Haemophilus influenzae (strain PittEE) protein is Lipoyl synthase.